A 309-amino-acid polypeptide reads, in one-letter code: Methyltransferase AacuQ (309 aa).

Residues 57 to 149 (DVGAGNGPYA…QLRPGGTFAC (93 aa)) form a methyltransferase domain region.

The protein belongs to the methyltransferase superfamily.

It participates in secondary metabolite biosynthesis. Functionally, methyltransferase; part of the gene cluster that mediates the biosynthesis of the tetrahydroxanthone dimer secalonic acid D. The pathway begins with the synthesis of atrochrysone thioester by the polyketide synthase AacuL. The atrochrysone carboxyl ACP thioesterase AacuM then breaks the thioester bond and releases the atrochrysone carboxylic acid from AacuL. Atrochrysone carboxylic acid is decarboxylated by the decarboxylase AacuI, and oxidized by the anthrone oxygenase AacuG to yield emodin. Emodin is then reduced to emodin hydroquinone by a yet unidentified oxidoreductase. A-ring reduction by the short chain dehydrogenase AacuN, dehydration by the scytalone dehydratase-like protein AacuK and probable spontaneous re-oxidation, results in overall deoxygenation to chrysophanol. Baeyer-Villiger oxidation by the Baeyer-Villiger monooxygenase (BVMO) AacuH then yields monodictyphenone. Monodictyphenone is transformed into compounds with the tetrahydroxanthone skeleton via methylesterification by the methyltransferase AacuQ, followed by the action of the flavin-dependent monooxygenase AacuC, the isomerase AacuP, and the short chain dehydrogenase/reductase AacuF or AacuD. AacuF and AacuD should accept the same compound as a substrate but perform the ketoreduction with a different stereoselectivity, thus yielding blennolides B and A, respectively. In the final step of the biosynthesis, the cytochrome P450 monooxygenase AacuE accepts blennolide B and/or blennolide A to conduct the dimerization reaction to furnish the tetrahydroxanthone dimers, secalonic acids D, B, and F. This chain is Methyltransferase AacuQ, found in Aspergillus aculeatus (strain ATCC 16872 / CBS 172.66 / WB 5094).